A 765-amino-acid polypeptide reads, in one-letter code: Glucosamine inositolphosphorylceramide transferase 1 (765 aa).

3 helical membrane passes run 43 to 63, 394 to 414, and 476 to 496; these read FFASCFGFYAFVAATYAWFVF, VILGYASLAAAISVVILLGFL, and MGKFTLGVIVILGLLLTCVGV. Substrate-binding positions include N553, 577 to 582, 598 to 600, R628, and 683 to 687; these read NSLNNR, DDD, and FNCED. D600 is a binding site for Mn(2+). A disulfide bond links C685 and C738. D687 is an active-site residue.

The protein belongs to the glycosyltransferase 64 family. Mn(2+) serves as cofactor. As to expression, specifically and highly expressed in developing embryos and mature seeds. Also detected at low levels in stigma and pollen.

It localises to the membrane. It catalyses the reaction an N-(2R-hydroxy-very-long-chain fatty acyl)-(R)-4-hydroxysphingoid base + a 1,2-diacyl-sn-glycero-3-phospho-(1D-myo-inositol) = a 1D-myo-inositol-1-phospho-N-[(R)-2-hydroxy-very-long-chain fatty acyl]-(R)-4-hydroxysphingoid base + a 1,2-diacyl-sn-glycerol. It functions in the pathway sphingolipid metabolism. In terms of biological role, glycosyltransferase that mediates the glycosylation of glycosylinositol phosphorylceramides (GIPCs), the major sphingolipids in the plasma membrane; acts as a HexN(Ac)-specific GIPC sugar transferase and accepts glucosamine (GlcN) and N-acetylglucosamine (GlcNAc) as the sugar unit. Responsible for the glycosylation of a subgroup of GIPCs found in seeds and pollen that contain GlcNAc and GlcN (GlcN(Ac)). Maybe involved in the maintenance of cell-cell adhesion. The polypeptide is Glucosamine inositolphosphorylceramide transferase 1 (Arabidopsis thaliana (Mouse-ear cress)).